The following is a 275-amino-acid chain: Ditrans,polycis-undecaprenyl-diphosphate synthase ((2E,6E)-farnesyl-diphosphate specific) (275 aa).

The active site involves D45. D45 contacts Mg(2+). Residues 46–49 (GNGR), W50, R58, H62, and 90–92 (SSE) each bind substrate. Catalysis depends on N93, which acts as the Proton acceptor. Substrate is bound by residues W94, R96, R213, and 219–221 (RIS). Residue E232 coordinates Mg(2+).

The protein belongs to the UPP synthase family. As to quaternary structure, homodimer. Requires Mg(2+) as cofactor.

The enzyme catalyses 8 isopentenyl diphosphate + (2E,6E)-farnesyl diphosphate = di-trans,octa-cis-undecaprenyl diphosphate + 8 diphosphate. Catalyzes the sequential condensation of isopentenyl diphosphate (IPP) with (2E,6E)-farnesyl diphosphate (E,E-FPP) to yield (2Z,6Z,10Z,14Z,18Z,22Z,26Z,30Z,34E,38E)-undecaprenyl diphosphate (di-trans,octa-cis-UPP). UPP is the precursor of glycosyl carrier lipid in the biosynthesis of bacterial cell wall polysaccharide components such as peptidoglycan and lipopolysaccharide. This Shewanella oneidensis (strain ATCC 700550 / JCM 31522 / CIP 106686 / LMG 19005 / NCIMB 14063 / MR-1) protein is Ditrans,polycis-undecaprenyl-diphosphate synthase ((2E,6E)-farnesyl-diphosphate specific).